Consider the following 578-residue polypeptide: MITHYSLPITRYPLPRFLTLSQIEFPSQFDVLVVGAGAAGLYTALCLPESLRVGLITKETVALSASDWAQGGIAAAIAPNDSPSLHIEDTIQAGAGLCDVAAVEFLAQQAPKCIESLVNLGVAFDRHGQALALTLEAAHSRNRVLHAADTTGREVTTTLTDQVLRRPNIQVIQQALALSLWLEPETGHCQGISLFYQGAITWVRAGAVVLATGGGGQVFAQTTNPAVSTGDGVAIAWRAGAILRDLEFVQFHPTALTKPGADRFLISEAVRGEGAHLVDNEGRRFAFDYHPAGELAPRDVVSRAIFSHLQRTAVDPATAHVWLDMRPIPEDKIRLRFPNIVKVCQRWGIDVFREPIPVAPAAHYWMGGIATNLKNQTNIPGLYAVGETASTGVHGANRLASNSLLECIVFGAQLANLTPADLIQHTETPALPTREFKIDASEWQHQQSQLAILREKLPRLVWQSAGICREQSTLSVAIATVKSWQQDFAALPLSQFLLSLQPNEPVSCNFSDTDQQLRLWAETGNLLDVAYLILKSAAFRIESRGGHFRLDYPHSNPDWQVHSLVQKHQWWQSPIMKS.

FAD-binding positions include A36 to A39, K58, A65 to G72, and D231. R298 (proton donor/acceptor) is an active-site residue. FAD-binding positions include E387 and S403 to L404.

It belongs to the FAD-dependent oxidoreductase 2 family. NadB subfamily. FAD serves as cofactor.

It localises to the cytoplasm. The catalysed reaction is L-aspartate + O2 = iminosuccinate + H2O2. The protein operates within cofactor biosynthesis; NAD(+) biosynthesis; iminoaspartate from L-aspartate (oxidase route): step 1/1. Functionally, catalyzes the oxidation of L-aspartate to iminoaspartate, the first step in the de novo biosynthesis of NAD(+). The polypeptide is L-aspartate oxidase (nadB) (Nostoc sp. (strain PCC 7120 / SAG 25.82 / UTEX 2576)).